The primary structure comprises 729 residues: Fatty acid oxidation complex subunit alpha (729 aa).

Residues 1–189 form an enoyl-CoA hydratase/isomerase region; it reads MLYKGDTLYL…KIGLVDGVVK (189 aa). Asp296 provides a ligand contact to substrate. The segment at 311 to 729 is 3-hydroxyacyl-CoA dehydrogenase; it reads ETPKQAAVLG…ARPVGSLKTA (419 aa). NAD(+) is bound by residues Met324, Asp343, 400–402, Lys407, and Ser429; that span reads VVE. Catalysis depends on His450, which acts as the For 3-hydroxyacyl-CoA dehydrogenase activity. Asn453 provides a ligand contact to NAD(+). Substrate is bound by residues Asn500 and Tyr660. The disordered stretch occupies residues 708 to 729; sequence RHNEPYYPPVEPARPVGSLKTA.

The protein in the N-terminal section; belongs to the enoyl-CoA hydratase/isomerase family. In the C-terminal section; belongs to the 3-hydroxyacyl-CoA dehydrogenase family. In terms of assembly, heterotetramer of two alpha chains (FadB) and two beta chains (FadA).

The catalysed reaction is a (3S)-3-hydroxyacyl-CoA + NAD(+) = a 3-oxoacyl-CoA + NADH + H(+). The enzyme catalyses a (3S)-3-hydroxyacyl-CoA = a (2E)-enoyl-CoA + H2O. It catalyses the reaction a 4-saturated-(3S)-3-hydroxyacyl-CoA = a (3E)-enoyl-CoA + H2O. It carries out the reaction (3S)-3-hydroxybutanoyl-CoA = (3R)-3-hydroxybutanoyl-CoA. The catalysed reaction is a (3Z)-enoyl-CoA = a 4-saturated (2E)-enoyl-CoA. The enzyme catalyses a (3E)-enoyl-CoA = a 4-saturated (2E)-enoyl-CoA. Its pathway is lipid metabolism; fatty acid beta-oxidation. Its function is as follows. Involved in the aerobic and anaerobic degradation of long-chain fatty acids via beta-oxidation cycle. Catalyzes the formation of 3-oxoacyl-CoA from enoyl-CoA via L-3-hydroxyacyl-CoA. It can also use D-3-hydroxyacyl-CoA and cis-3-enoyl-CoA as substrate. The protein is Fatty acid oxidation complex subunit alpha of Salmonella newport (strain SL254).